A 353-amino-acid polypeptide reads, in one-letter code: Lactosylceramide 4-alpha-galactosyltransferase (353 aa).

Over 1-22 (MSKPPDLLLRLLRGAPRQRVCT) the chain is Cytoplasmic. Residues 23–43 (LFIIGFKFTFFVSIMIYWHVV) form a helical; Signal-anchor for type II membrane protein membrane-spanning segment. The Lumenal portion of the chain corresponds to 44–353 (GEPKEKGQLY…TTHEAMKMYL (310 aa)). The N-linked (GlcNAc...) asparagine glycan is linked to N121. The short motif at 192 to 194 (DTD) is the DXD motif element. Residue N203 is glycosylated (N-linked (GlcNAc...) asparagine).

The protein belongs to the glycosyltransferase 32 family. Ubiquitous. Highly expressed in kidney, heart, spleen, liver, testis and placenta.

The protein resides in the golgi apparatus membrane. It carries out the reaction a beta-D-Gal-(1-&gt;4)-beta-D-Glc-(1&lt;-&gt;1)-Cer(d18:1(4E)) + UDP-alpha-D-galactose = a globoside Gb3Cer (d18:1(4E)) + UDP + H(+). It catalyses the reaction a beta-D-Gal-(1&lt;-&gt;1')-ceramide + UDP-alpha-D-galactose = alpha-D-Gal-(1-&gt;4)-beta-D-Gal-(1&lt;-&gt;1')-Cer + UDP + H(+). It participates in glycolipid biosynthesis. Its function is as follows. Catalyzes the transfer of galactose from UDP-alpha-D-galactose to lactosylceramide/beta-D-galactosyl-(1-&gt;4)-beta-D-glucosyl-(1&lt;-&gt;1)-ceramide(d18:1(4E)) to produce globotriaosylceramide/globoside Gb3Cer (d18:1(4E)). Also able to transfer galactose to galactosylceramide/beta-D-Gal-(1&lt;-&gt;1')-Cer. Globoside Gb3Cer is a glycosphingolipid of the globo serie, one of the major types of neutral root structures of glycosphingolipids, that constitute a significant portion of mammalian cell membranes. Globotriaosylceramide/globoside Gb3Cer in blood and tissue cell membranes is the antigen Pk of blood histogroup P. (Microbial infection) Globotriaosylceramide is one of the cellular ligands for bacterial verotoxins. In Homo sapiens (Human), this protein is Lactosylceramide 4-alpha-galactosyltransferase (A4GALT).